Reading from the N-terminus, the 105-residue chain is Nucleoid-associated protein EAT1b_1710 (105 aa).

The segment covering 1-16 (MRGMGNMNNMMKQMQK) has biased composition (low complexity). A disordered region spans residues 1 to 26 (MRGMGNMNNMMKQMQKMQKDMAKAQE). Residues 17–26 (MQKDMAKAQE) show a composition bias toward basic and acidic residues.

Belongs to the YbaB/EbfC family. Homodimer.

It localises to the cytoplasm. The protein resides in the nucleoid. Functionally, binds to DNA and alters its conformation. May be involved in regulation of gene expression, nucleoid organization and DNA protection. The protein is Nucleoid-associated protein EAT1b_1710 of Exiguobacterium sp. (strain ATCC BAA-1283 / AT1b).